A 372-amino-acid chain; its full sequence is NAD(P)H-quinone oxidoreductase subunit 1 (372 aa).

8 consecutive transmembrane segments (helical) span residues 29–49, 97–117, 130–150, 176–196, 204–224, 254–274, 308–328, and 347–367; these read WIPF…LVVV, WLFT…YLIV, VGIF…LMAG, LALS…IDIV, ILGW…IAAL, FALF…VFAI, SLGI…AVLM, and FLLP…LAFP.

It belongs to the complex I subunit 1 family. NDH-1 is composed of at least 11 different subunits.

The protein localises to the cellular thylakoid membrane. The catalysed reaction is a plastoquinone + NADH + (n+1) H(+)(in) = a plastoquinol + NAD(+) + n H(+)(out). It catalyses the reaction a plastoquinone + NADPH + (n+1) H(+)(in) = a plastoquinol + NADP(+) + n H(+)(out). In terms of biological role, NDH-1 shuttles electrons from an unknown electron donor, via FMN and iron-sulfur (Fe-S) centers, to quinones in the respiratory and/or the photosynthetic chain. The immediate electron acceptor for the enzyme in this species is believed to be plastoquinone. Couples the redox reaction to proton translocation, and thus conserves the redox energy in a proton gradient. This is NAD(P)H-quinone oxidoreductase subunit 1 from Crocosphaera subtropica (strain ATCC 51142 / BH68) (Cyanothece sp. (strain ATCC 51142)).